Reading from the N-terminus, the 453-residue chain is Serine/threonine-protein kinase VRK3 (453 aa).

The interval 30–123 is disordered; that stretch reads EDGGTQSAVT…QSPQTLKRTR (94 aa). The span at 33-46 shows a compositional bias: polar residues; the sequence is GTQSAVTPHVSSVP. Positions 49–64 match the Nuclear localization signal motif; sequence RRDLNSSFETSPKKVK. Residues Ser54, Ser55, Ser59, Ser82, Ser83, and Ser108 each carry the phosphoserine modification. Residues 81–101 show a composition bias toward polar residues; it reads DSSGSDNTLTSPDRATGTRSR. Residues 109 to 123 are compositionally biased toward polar residues; it reads PLSNRQSPQTLKRTR. One can recognise a Protein kinase domain in the interval 125-436; it reads TTSLQALATG…TLRNSLEALL (312 aa).

Belongs to the protein kinase superfamily. CK1 Ser/Thr protein kinase family. VRK subfamily. As to quaternary structure, interacts with DUSP3. Interacts with RAN. Interacts with HSP70/HSPA1A. Post-translationally, phosphorylated at Ser-108 by CDK5; leading to protection of the cell against H2O2-induced apoptosis. Ubiquitinated by RNF144A. Expressed in liver, kidney, muscle, thymus, and bone marrow. Weakly expressed in spleen.

It localises to the nucleus. It is found in the cytoplasm. It catalyses the reaction L-seryl-[protein] + ATP = O-phospho-L-seryl-[protein] + ADP + H(+). Its function is as follows. Plays a role in the regulation of the cell cycle by phosphorylating the nuclear envelope protein barrier-to-autointegration factor/BAF that is required for disassembly and reassembly, respectively, of the nuclear envelope during mitosis. Under normal physiological conditions, negatively regulates ERK activity along with VHR phosphatase in the nucleus, causing timely and transient action of ERK. Stress conditions activate CDK5 which phosphorylates VRK3 to increase VHR phosphatase activity and suppress prolonged ERK activation that causes cell death. For example, upon glutamate induction, promotes nuclear localization of HSP70/HSPA1A to inhibit ERK activation via VHR phosphatase. In Mus musculus (Mouse), this protein is Serine/threonine-protein kinase VRK3 (Vrk3).